The primary structure comprises 318 residues: Ribosomal RNA small subunit methyltransferase H (318 aa).

S-adenosyl-L-methionine is bound by residues 37-39 (GGH), aspartate 57, phenylalanine 83, aspartate 104, and glutamine 111.

It belongs to the methyltransferase superfamily. RsmH family.

The protein localises to the cytoplasm. The enzyme catalyses cytidine(1402) in 16S rRNA + S-adenosyl-L-methionine = N(4)-methylcytidine(1402) in 16S rRNA + S-adenosyl-L-homocysteine + H(+). In terms of biological role, specifically methylates the N4 position of cytidine in position 1402 (C1402) of 16S rRNA. The polypeptide is Ribosomal RNA small subunit methyltransferase H (Neisseria gonorrhoeae (strain NCCP11945)).